Consider the following 657-residue polypeptide: N-acetylgalactosaminyltransferase 7 (657 aa).

Topologically, residues 1–6 (MRLKIG) are cytoplasmic. A helical; Signal-anchor for type II membrane protein membrane pass occupies residues 7-29 (FILRSLLVVGSFLGLVVLWSSLT). Over 30-657 (PRPDDPSPLS…KWEMNNIHSV (628 aa)) the chain is Lumenal. Positions 31 to 65 (RPDDPSPLSRMREDRDVNDPMPNRGGNGLAPGEDR) are disordered. Disulfide bonds link Cys197-Cys435, Cys426-Cys507, Cys545-Cys562, Cys585-Cys600, and Cys625-Cys640. The segment at 206 to 317 (LLTSSVVIVF…VNWYAPLVAP (112 aa)) is catalytic subdomain A. Substrate is bound by residues Asp247 and Arg277. Positions 301 and 303 each coordinate Mn(2+). Positions 381–443 (PYRSPAMAGG…PCSRVGHIYR (63 aa)) are catalytic subdomain B. A substrate-binding site is contributed by Trp412. Residue His440 participates in Mn(2+) binding. Position 443 (Arg443) interacts with substrate. One can recognise a Ricin B-type lectin domain in the interval 532 to 652 (VDWGEIRGFE…SKTTQKWEMN (121 aa)).

The protein belongs to the glycosyltransferase 2 family. GalNAc-T subfamily. Mn(2+) serves as cofactor. In terms of tissue distribution, widely expressed. Expressed in uterus, retina, kidney, small intestine, omentum, stomach and CNS.

The protein resides in the golgi apparatus membrane. It carries out the reaction L-seryl-[protein] + UDP-N-acetyl-alpha-D-galactosamine = a 3-O-[N-acetyl-alpha-D-galactosaminyl]-L-seryl-[protein] + UDP + H(+). It catalyses the reaction L-threonyl-[protein] + UDP-N-acetyl-alpha-D-galactosamine = a 3-O-[N-acetyl-alpha-D-galactosaminyl]-L-threonyl-[protein] + UDP + H(+). The protein operates within protein modification; protein glycosylation. In terms of biological role, glycopeptide transferase involved in O-linked oligosaccharide biosynthesis, which catalyzes the transfer of an N-acetyl-D-galactosamine residue to an already glycosylated peptide. In contrast to other proteins of the family, it does not act as a peptide transferase that transfers GalNAc onto serine or threonine residue on the protein receptor, but instead requires the prior addition of a GalNAc on a peptide before adding additional GalNAc moieties. Some peptide transferase activity is however not excluded, considering that its appropriate peptide substrate may remain unidentified. The polypeptide is N-acetylgalactosaminyltransferase 7 (GALNT7) (Homo sapiens (Human)).